The chain runs to 310 residues: GPN-loop GTPase 2 (310 aa).

At Ala2 the chain carries N-acetylalanine. Residue 19 to 24 (GSGKTT) participates in GTP binding. Positions 76-78 (GPN) match the Gly-Pro-Asn (GPN)-loop; involved in dimer interface motif. 178–181 (SKMD) is a GTP binding site.

The protein belongs to the GPN-loop GTPase family. In terms of assembly, heterodimers with GPN1 or GPN3. Binds to RNA polymerase II (RNAPII).

Functionally, small GTPase required for proper localization of RNA polymerase II and III (RNAPII and RNAPIII). May act at an RNAP assembly step prior to nuclear import. The chain is GPN-loop GTPase 2 from Rattus norvegicus (Rat).